We begin with the raw amino-acid sequence, 243 residues long: Small ribosomal subunit protein uS3 (243 aa).

The KH type-2 domain maps to 38 to 106; the sequence is IRKYLNARLA…DIQINIFEVK (69 aa). Residues 217-243 form a disordered region; sequence TQTKESGRGGNGNNNGGKNFKRKKNNR.

This sequence belongs to the universal ribosomal protein uS3 family. Part of the 30S ribosomal subunit. Forms a tight complex with proteins S10 and S14.

Its function is as follows. Binds the lower part of the 30S subunit head. Binds mRNA in the 70S ribosome, positioning it for translation. In Phocaeicola vulgatus (strain ATCC 8482 / DSM 1447 / JCM 5826 / CCUG 4940 / NBRC 14291 / NCTC 11154) (Bacteroides vulgatus), this protein is Small ribosomal subunit protein uS3.